The sequence spans 184 residues: 1,6-anhydro-N-acetylmuramyl-L-alanine amidase AmpD (184 aa).

In terms of domain architecture, N-acetylmuramoyl-L-alanine amidase spans 30-171; that stretch reads QDISLLVIHY…ISPKRKIDPG (142 aa). H38 is a Zn(2+) binding site. The active-site Proton acceptor is E120. Residues H159 and D169 each contribute to the Zn(2+) site.

This sequence belongs to the N-acetylmuramoyl-L-alanine amidase 2 family. The cofactor is Zn(2+).

It is found in the cytoplasm. It carries out the reaction Hydrolyzes the link between N-acetylmuramoyl residues and L-amino acid residues in certain cell-wall glycopeptides.. Functionally, involved in cell wall peptidoglycan recycling. Specifically cleaves the amide bond between the lactyl group of N-acetylmuramic acid and the alpha-amino group of the L-alanine in degradation products containing an anhydro N-acetylmuramyl moiety. This is 1,6-anhydro-N-acetylmuramyl-L-alanine amidase AmpD (ampD) from Haemophilus influenzae (strain ATCC 51907 / DSM 11121 / KW20 / Rd).